We begin with the raw amino-acid sequence, 81 residues long: MAVKIRLKRMGAHKKPFYRIVVADARSPRDGRFIEEIGYYNPVSEPKEIKINNEKAEKWLKNGAQPTDTVKDLFKKNGIIE.

This sequence belongs to the bacterial ribosomal protein bS16 family.

The sequence is that of Small ribosomal subunit protein bS16 from Alkaliphilus oremlandii (strain OhILAs) (Clostridium oremlandii (strain OhILAs)).